Consider the following 419-residue polypeptide: UDP-N-acetylglucosamine 1-carboxyvinyltransferase (419 aa).

Lys-22–Asn-23 lines the phosphoenolpyruvate pocket. Arg-92 contributes to the UDP-N-acetyl-alpha-D-glucosamine binding site. Catalysis depends on Cys-116, which acts as the Proton donor. At Cys-116 the chain carries 2-(S-cysteinyl)pyruvic acid O-phosphothioketal. UDP-N-acetyl-alpha-D-glucosamine is bound by residues Arg-121–Leu-125, Asp-307, and Leu-329.

It belongs to the EPSP synthase family. MurA subfamily.

The protein resides in the cytoplasm. The catalysed reaction is phosphoenolpyruvate + UDP-N-acetyl-alpha-D-glucosamine = UDP-N-acetyl-3-O-(1-carboxyvinyl)-alpha-D-glucosamine + phosphate. It participates in cell wall biogenesis; peptidoglycan biosynthesis. Its function is as follows. Cell wall formation. Adds enolpyruvyl to UDP-N-acetylglucosamine. In Campylobacter fetus subsp. fetus (strain 82-40), this protein is UDP-N-acetylglucosamine 1-carboxyvinyltransferase.